A 226-amino-acid polypeptide reads, in one-letter code: Biosynthetic peptidoglycan transglycosylase (226 aa).

A helical membrane pass occupies residues 7 to 29; the sequence is VMALSAIGLLLLPYLLTPLYRIG.

It belongs to the glycosyltransferase 51 family.

The protein localises to the cell inner membrane. It catalyses the reaction [GlcNAc-(1-&gt;4)-Mur2Ac(oyl-L-Ala-gamma-D-Glu-L-Lys-D-Ala-D-Ala)](n)-di-trans,octa-cis-undecaprenyl diphosphate + beta-D-GlcNAc-(1-&gt;4)-Mur2Ac(oyl-L-Ala-gamma-D-Glu-L-Lys-D-Ala-D-Ala)-di-trans,octa-cis-undecaprenyl diphosphate = [GlcNAc-(1-&gt;4)-Mur2Ac(oyl-L-Ala-gamma-D-Glu-L-Lys-D-Ala-D-Ala)](n+1)-di-trans,octa-cis-undecaprenyl diphosphate + di-trans,octa-cis-undecaprenyl diphosphate + H(+). The protein operates within cell wall biogenesis; peptidoglycan biosynthesis. Functionally, peptidoglycan polymerase that catalyzes glycan chain elongation from lipid-linked precursors. The protein is Biosynthetic peptidoglycan transglycosylase of Nitrobacter winogradskyi (strain ATCC 25391 / DSM 10237 / CIP 104748 / NCIMB 11846 / Nb-255).